The sequence spans 141 residues: Large ribosomal subunit protein uL11 (141 aa).

This sequence belongs to the universal ribosomal protein uL11 family. Part of the ribosomal stalk of the 50S ribosomal subunit. Interacts with L10 and the large rRNA to form the base of the stalk. L10 forms an elongated spine to which L12 dimers bind in a sequential fashion forming a multimeric L10(L12)X complex. Post-translationally, one or more lysine residues are methylated.

Its function is as follows. Forms part of the ribosomal stalk which helps the ribosome interact with GTP-bound translation factors. The chain is Large ribosomal subunit protein uL11 from Geobacter sulfurreducens (strain ATCC 51573 / DSM 12127 / PCA).